The chain runs to 257 residues: 3-deoxy-manno-octulosonate cytidylyltransferase (257 aa).

It belongs to the KdsB family.

It localises to the cytoplasm. The enzyme catalyses 3-deoxy-alpha-D-manno-oct-2-ulosonate + CTP = CMP-3-deoxy-beta-D-manno-octulosonate + diphosphate. It participates in nucleotide-sugar biosynthesis; CMP-3-deoxy-D-manno-octulosonate biosynthesis; CMP-3-deoxy-D-manno-octulosonate from 3-deoxy-D-manno-octulosonate and CTP: step 1/1. Its pathway is bacterial outer membrane biogenesis; lipopolysaccharide biosynthesis. In terms of biological role, activates KDO (a required 8-carbon sugar) for incorporation into bacterial lipopolysaccharide in Gram-negative bacteria. The chain is 3-deoxy-manno-octulosonate cytidylyltransferase from Methylococcus capsulatus (strain ATCC 33009 / NCIMB 11132 / Bath).